A 215-amino-acid chain; its full sequence is Probable transaldolase (215 aa).

The Schiff-base intermediate with substrate role is filled by Lys83.

It belongs to the transaldolase family. Type 3B subfamily.

It localises to the cytoplasm. It catalyses the reaction D-sedoheptulose 7-phosphate + D-glyceraldehyde 3-phosphate = D-erythrose 4-phosphate + beta-D-fructose 6-phosphate. The protein operates within carbohydrate degradation; pentose phosphate pathway; D-glyceraldehyde 3-phosphate and beta-D-fructose 6-phosphate from D-ribose 5-phosphate and D-xylulose 5-phosphate (non-oxidative stage): step 2/3. Transaldolase is important for the balance of metabolites in the pentose-phosphate pathway. The sequence is that of Probable transaldolase from Heliobacterium modesticaldum (strain ATCC 51547 / Ice1).